We begin with the raw amino-acid sequence, 353 residues long: Phospho-N-acetylmuramoyl-pentapeptide-transferase (353 aa).

10 consecutive transmembrane segments (helical) span residues 22–42 (FAFFIALCLSLFLMPKFITWA), 65–85 (TPTMGGLIFISSAVIASLFCI), 88–108 (DNIFAISALLCLILFCLIGLI), 129–149 (LLAQIIAGLICILPLYFSSEL), 161–181 (PLFDMEIFAIVFWILVLISSS), 192–212 (GLATVPSIFSLSTLGIFLYLS), 228–248 (GLGEVVIICAALIGALMGFLW), 256–276 (VFMGDSGSLALGGFIGFLAII), 281–301 (ILLLLIGFVFVLETVSVILQV), and 330–350 (KIIVRFWMIALLSNLLALASI).

The protein belongs to the glycosyltransferase 4 family. MraY subfamily. Mg(2+) serves as cofactor.

Its subcellular location is the cell inner membrane. It carries out the reaction UDP-N-acetyl-alpha-D-muramoyl-L-alanyl-gamma-D-glutamyl-meso-2,6-diaminopimeloyl-D-alanyl-D-alanine + di-trans,octa-cis-undecaprenyl phosphate = di-trans,octa-cis-undecaprenyl diphospho-N-acetyl-alpha-D-muramoyl-L-alanyl-D-glutamyl-meso-2,6-diaminopimeloyl-D-alanyl-D-alanine + UMP. The protein operates within cell wall biogenesis; peptidoglycan biosynthesis. Its function is as follows. Catalyzes the initial step of the lipid cycle reactions in the biosynthesis of the cell wall peptidoglycan: transfers peptidoglycan precursor phospho-MurNAc-pentapeptide from UDP-MurNAc-pentapeptide onto the lipid carrier undecaprenyl phosphate, yielding undecaprenyl-pyrophosphoryl-MurNAc-pentapeptide, known as lipid I. The sequence is that of Phospho-N-acetylmuramoyl-pentapeptide-transferase from Campylobacter jejuni subsp. jejuni serotype O:6 (strain 81116 / NCTC 11828).